The chain runs to 270 residues: NAD kinase (270 aa).

Aspartate 49 (proton acceptor) is an active-site residue. NAD(+) is bound by residues 49 to 50, arginine 54, 126 to 127, arginine 152, aspartate 154, 165 to 170, alanine 189, and glutamine 227; these read DG, NE, and TAYNKS.

It belongs to the NAD kinase family. A divalent metal cation serves as cofactor.

It localises to the cytoplasm. It catalyses the reaction NAD(+) + ATP = ADP + NADP(+) + H(+). Its function is as follows. Involved in the regulation of the intracellular balance of NAD and NADP, and is a key enzyme in the biosynthesis of NADP. Catalyzes specifically the phosphorylation on 2'-hydroxyl of the adenosine moiety of NAD to yield NADP. The sequence is that of NAD kinase from Lactococcus lactis subsp. cremoris (strain SK11).